Reading from the N-terminus, the 294-residue chain is Bifunctional protein FolD (294 aa).

Residues 164–166 (GRS), S193, and I234 each bind NADP(+).

The protein belongs to the tetrahydrofolate dehydrogenase/cyclohydrolase family. Homodimer.

It catalyses the reaction (6R)-5,10-methylene-5,6,7,8-tetrahydrofolate + NADP(+) = (6R)-5,10-methenyltetrahydrofolate + NADPH. It carries out the reaction (6R)-5,10-methenyltetrahydrofolate + H2O = (6R)-10-formyltetrahydrofolate + H(+). It participates in one-carbon metabolism; tetrahydrofolate interconversion. Its function is as follows. Catalyzes the oxidation of 5,10-methylenetetrahydrofolate to 5,10-methenyltetrahydrofolate and then the hydrolysis of 5,10-methenyltetrahydrofolate to 10-formyltetrahydrofolate. In Flavobacterium psychrophilum (strain ATCC 49511 / DSM 21280 / CIP 103535 / JIP02/86), this protein is Bifunctional protein FolD.